The sequence spans 306 residues: Homoserine kinase (306 aa).

Position 95–105 (95–105 (PHSRGLGSSAA)) interacts with ATP.

This sequence belongs to the GHMP kinase family. Homoserine kinase subfamily.

It is found in the cytoplasm. It carries out the reaction L-homoserine + ATP = O-phospho-L-homoserine + ADP + H(+). The protein operates within amino-acid biosynthesis; L-threonine biosynthesis; L-threonine from L-aspartate: step 4/5. Catalyzes the ATP-dependent phosphorylation of L-homoserine to L-homoserine phosphate. The chain is Homoserine kinase from Mycobacteroides abscessus (strain ATCC 19977 / DSM 44196 / CCUG 20993 / CIP 104536 / JCM 13569 / NCTC 13031 / TMC 1543 / L948) (Mycobacterium abscessus).